Here is a 141-residue protein sequence, read N- to C-terminus: Mitochondrial import inner membrane translocase subunit tim16 (141 aa).

Residues 59–117 (EACKILNVNKPADGTAANMEEVMERFKRLFDANDPEKGGSFYLQSKVVRARERLEAEIK) form a J-like region. The disordered stretch occupies residues 119-141 (KMEEKQAEEEVKEGWNPKIYKDR).

The protein belongs to the TIM16/PAM16 family. In terms of assembly, heterodimer with tim14/pam18. Component of the PAM complex, at least composed of hsp70-5/ssc1, grpe/mge1, tim44, un-4/pam16, pam17 and tim14/pam18.

The protein resides in the mitochondrion inner membrane. Essential component of the PAM complex, a complex required for the translocation of transit peptide-containing proteins from the inner membrane into the mitochondrial matrix in an ATP-dependent manner. In the complex, it is required to regulate activity of mtHSP70 (hsp70-5) via its interaction with tim14/pam18. May act by positioning tim14/pam18 in juxtaposition to mtHSP70 at the translocon to maximize ATPase stimulation. The sequence is that of Mitochondrial import inner membrane translocase subunit tim16 (un-4) from Neurospora crassa (strain ATCC 24698 / 74-OR23-1A / CBS 708.71 / DSM 1257 / FGSC 987).